Consider the following 427-residue polypeptide: MESLTLQPIARVDGAINLPGSKSVSNRALLLAALACGKTVLTNLLDSDDVRHMLNALSALGINYTLSADRTRCDITGNGGALRAPGALELFLGNAGTAMRPLAAALCLGQNEIVLTGEPRMKERPIGHLVDSLRQGGANIDYLEQENYPPLRLRGGFTGGEIEVDGSVSSQFLTALLMTAPLAPEDTTIRVKGELVSKPYIDITLNLMKTFGVEIANHHYQQFVVKGGQQYHSPGRYLVEGDASSASYFLAAGAIKGGTVKVTGIGRKSMQGDIRFADVLEKMGATITWGDDFIACTRGELHAIDMDMNHIPDAAMTIATTALFAKGTTTLRNIYNWRVKETDRLFAMATELRKVGAEVEEGHDYIRITPPAKLHHADIGTYNDHRMAMCFSLVALSDTPVTILDPKCTAKTFPDYFEQLARMSTPA.

Residues Lys22, Ser23, and Arg27 each contribute to the 3-phosphoshikimate site. Position 22 (Lys22) interacts with phosphoenolpyruvate. Positions 96 and 124 each coordinate phosphoenolpyruvate. The 3-phosphoshikimate site is built by Ser169, Ser170, Gln171, Ser197, Asp313, Asn336, and Lys340. Gln171 provides a ligand contact to phosphoenolpyruvate. Residue Asp313 is the Proton acceptor of the active site. Phosphoenolpyruvate contacts are provided by Arg344, Arg386, and Lys411.

Belongs to the EPSP synthase family. As to quaternary structure, monomer.

Its subcellular location is the cytoplasm. It carries out the reaction 3-phosphoshikimate + phosphoenolpyruvate = 5-O-(1-carboxyvinyl)-3-phosphoshikimate + phosphate. It participates in metabolic intermediate biosynthesis; chorismate biosynthesis; chorismate from D-erythrose 4-phosphate and phosphoenolpyruvate: step 6/7. In terms of biological role, catalyzes the transfer of the enolpyruvyl moiety of phosphoenolpyruvate (PEP) to the 5-hydroxyl of shikimate-3-phosphate (S3P) to produce enolpyruvyl shikimate-3-phosphate and inorganic phosphate. The protein is 3-phosphoshikimate 1-carboxyvinyltransferase of Salmonella schwarzengrund (strain CVM19633).